A 71-amino-acid chain; its full sequence is Disintegrin ussuristatin-2 (71 aa).

The region spanning 1–71 is the Disintegrin domain; sequence EAGEECDCGA…QSADCPRNGF (71 aa). 6 cysteine pairs are disulfide-bonded: Cys6-Cys21, Cys8-Cys16, Cys15-Cys38, Cys29-Cys35, Cys34-Cys59, and Cys47-Cys66. The Cell attachment site; atypical (KGD) motif lies at 51-53; that stretch reads KGD.

Belongs to the venom metalloproteinase (M12B) family. P-II subfamily. P-IId sub-subfamily. Homodimer. Expressed by the venom gland.

The protein localises to the secreted. Its function is as follows. Suppress platelet aggregation induced by ADP, collagen, thrombin, and epinephrine (IC(50)=170-330 nM). Also dose-dependently inhibits the adhesion of human melanoma cells to fibrinogen but not to fibronectin. The protein is Disintegrin ussuristatin-2 of Gloydius ussuriensis (Ussuri mamushi).